The chain runs to 805 residues: Na(+)/H(+) antiporter subunit A1 (805 aa).

A run of 20 helical transmembrane segments spans residues 1–21, 30–50, 79–99, 117–137, 166–186, 201–221, 226–246, 265–285, 300–320, 337–357, 377–397, 427–447, 480–500, 531–551, 591–611, 623–643, 646–666, 671–691, 707–727, and 766–786; these read MSLL…IPFV, LGWF…SYIS, LGLL…LYSI, LFMG…LYLF, MLVT…LSIA, EIQT…GAMT, FPFY…SAYL, IFAV…ITLF, ILAF…GVGA, FTAA…LFMI, LTIM…MAGI, LGIL…VYSI, ILAI…GSII, LGIY…IYLL, LVII…VTPF, PFEL…IFAK, LFSI…FIFF, LALT…LCFY, LVNI…GLIA, and TLFE…MIKL.

It belongs to the CPA3 antiporters (TC 2.A.63) subunit A family. As to quaternary structure, may form a heterooligomeric complex that consists of seven subunits: mnhA1, mnhB1, mnhC1, mnhD1, mnhE1, mnhF1 and mnhG1.

It is found in the cell membrane. Its function is as follows. Mnh complex is a Na(+)/H(+) antiporter involved in Na(+) excretion. The sequence is that of Na(+)/H(+) antiporter subunit A1 (mnhA1) from Staphylococcus saprophyticus subsp. saprophyticus (strain ATCC 15305 / DSM 20229 / NCIMB 8711 / NCTC 7292 / S-41).